We begin with the raw amino-acid sequence, 432 residues long: Amino-acid acetyltransferase (432 aa).

One can recognise an N-acetyltransferase domain in the interval 286 to 425; that stretch reads ELVREAAIED…ASLYNFQRNS (140 aa).

This sequence belongs to the acetyltransferase family. ArgA subfamily.

It localises to the cytoplasm. It catalyses the reaction L-glutamate + acetyl-CoA = N-acetyl-L-glutamate + CoA + H(+). The protein operates within amino-acid biosynthesis; L-arginine biosynthesis; N(2)-acetyl-L-ornithine from L-glutamate: step 1/4. The sequence is that of Amino-acid acetyltransferase from Pseudomonas syringae pv. tomato (strain ATCC BAA-871 / DC3000).